Reading from the N-terminus, the 98-residue chain is Small ribosomal subunit protein bS20 (98 aa).

Over residues Met-1–Pro-12 the composition is skewed to basic residues. The interval Met-1–Lys-20 is disordered.

This sequence belongs to the bacterial ribosomal protein bS20 family.

Functionally, binds directly to 16S ribosomal RNA. This Chlamydia caviae (strain ATCC VR-813 / DSM 19441 / 03DC25 / GPIC) (Chlamydophila caviae) protein is Small ribosomal subunit protein bS20.